A 72-amino-acid polypeptide reads, in one-letter code: Translation initiation factor IF-1 (72 aa).

Residues 1 to 72 (MSKQSSIEQD…TKGRIVFRYK (72 aa)) form the S1-like domain.

This sequence belongs to the IF-1 family. Component of the 30S ribosomal translation pre-initiation complex which assembles on the 30S ribosome in the order IF-2 and IF-3, IF-1 and N-formylmethionyl-tRNA(fMet); mRNA recruitment can occur at any time during PIC assembly.

Its subcellular location is the cytoplasm. Its function is as follows. One of the essential components for the initiation of protein synthesis. Stabilizes the binding of IF-2 and IF-3 on the 30S subunit to which N-formylmethionyl-tRNA(fMet) subsequently binds. Helps modulate mRNA selection, yielding the 30S pre-initiation complex (PIC). Upon addition of the 50S ribosomal subunit IF-1, IF-2 and IF-3 are released leaving the mature 70S translation initiation complex. This chain is Translation initiation factor IF-1, found in Cytophaga hutchinsonii (strain ATCC 33406 / DSM 1761 / CIP 103989 / NBRC 15051 / NCIMB 9469 / D465).